Reading from the N-terminus, the 246-residue chain is MRKPVIAGNWKMNMTCTEAIEYMRVLIPLLKDIPKKDREVVIAPPFTALYPLSEFIRDKNDCLSLSSQNVHWEDSGAYTAEVSPLMLNELSVKCAIVGHSEPRKYFSESDEQINKRAKSAQDHQLIPIVCVGETFQQREMGEAERVIRRQIEQGLEGIEVKKLIVAYEPIWAIGTGKTCEANEANRICGLIRKWIGYEDVIIQYGGSVKSNNIDEIMSMSDIDGVLVGGASLDPTNFARIANYEKI.

Position 9-11 (9-11 (NWK)) interacts with substrate. The active-site Electrophile is the H99. E168 functions as the Proton acceptor in the catalytic mechanism. Substrate is bound by residues G174, S207, and 228–229 (GG).

The protein belongs to the triosephosphate isomerase family. Homodimer.

Its subcellular location is the cytoplasm. The enzyme catalyses D-glyceraldehyde 3-phosphate = dihydroxyacetone phosphate. Its pathway is carbohydrate biosynthesis; gluconeogenesis. The protein operates within carbohydrate degradation; glycolysis; D-glyceraldehyde 3-phosphate from glycerone phosphate: step 1/1. In terms of biological role, involved in the gluconeogenesis. Catalyzes stereospecifically the conversion of dihydroxyacetone phosphate (DHAP) to D-glyceraldehyde-3-phosphate (G3P). This Prochlorococcus marinus (strain NATL1A) protein is Triosephosphate isomerase.